The chain runs to 177 residues: MSRIGKRPVTIPSGVTANIADGVLTVKGPKGTLTLTLRDEISYTVDGDTILVKPANDTKGARAFWGMQRTLVDNLVTGVTQGYTKVLEITGVGYRANAQGKNLKLQLGYSHDVDFPVPEGIEIKTPDNTTVEISGIDKQKVGQVAAEIRRWRKPEPYKGKGIKYRGEFIFRKEGKKK.

This sequence belongs to the universal ribosomal protein uL6 family. In terms of assembly, part of the 50S ribosomal subunit.

Functionally, this protein binds to the 23S rRNA, and is important in its secondary structure. It is located near the subunit interface in the base of the L7/L12 stalk, and near the tRNA binding site of the peptidyltransferase center. In Novosphingobium aromaticivorans (strain ATCC 700278 / DSM 12444 / CCUG 56034 / CIP 105152 / NBRC 16084 / F199), this protein is Large ribosomal subunit protein uL6.